Consider the following 272-residue polypeptide: Endoplasmic reticulum resident protein 27 (272 aa).

An N-terminal signal peptide occupies residues 1 to 25; that stretch reads MKITRSRCLILSFVLVCGLVPEVTA. A Thioredoxin domain is found at 39–152; the sequence is EPIWLTDVPA…WVTEYSPMIA (114 aa). N-linked (GlcNAc...) asparagine glycans are attached at residues asparagine 91 and asparagine 100. The interval 230-233 is PDIA3-binding site; it reads DKWD. The Prevents secretion from ER signature appears at 269–272; the sequence is KEEL.

It belongs to the protein disulfide isomerase family. As to quaternary structure, interacts with PDIA3.

The protein resides in the endoplasmic reticulum lumen. Functionally, specifically binds unfolded proteins and may recruit protein disulfide isomerase PDIA3 to unfolded substrates. Binds protein substrates via a hydrophobic pocket in the C-terminal domain. May play a role in the unfolded stress response. This is Endoplasmic reticulum resident protein 27 (Erp27) from Mus musculus (Mouse).